Reading from the N-terminus, the 558-residue chain is Glucose-6-phosphate isomerase (558 aa).

An N-acetylalanine modification is found at Ala2. Lys12 is subject to N6-acetyllysine. The residue at position 34 (Lys34) is an N6-(2-hydroxyisobutyryl)lysine. Position 107 is a phosphoserine (Ser107). A Phosphothreonine modification is found at Thr109. Lys142 carries the N6-acetyllysine modification. 159-160 serves as a coordination point for D-glucose 6-phosphate; sequence GS. Ser185 is subject to Phosphoserine; by CK2. 210 to 215 is a binding site for D-glucose 6-phosphate; the sequence is SKTFTT. Phosphothreonine is present on Thr250. D-glucose 6-phosphate is bound by residues Gln354, Glu358, and His389. The active-site Proton donor is Glu358. His389 is an active-site residue. At Lys454 the chain carries N6-acetyllysine; alternate. Lys454 is modified (N6-malonyllysine; alternate). Position 454 is an N6-succinyllysine; alternate (Lys454). The residue at position 455 (Ser455) is a Phosphoserine. Position 519 (Lys519) interacts with D-glucose 6-phosphate. Lys519 is a catalytic residue.

Belongs to the GPI family. As to quaternary structure, homodimer; in the catalytically active form. Monomer in the secreted form. In terms of processing, phosphorylation at Ser-185 by CK2 has been shown to decrease enzymatic activity and may contribute to secretion by a non-classical secretory pathway. Post-translationally, ISGylated.

The protein localises to the cytoplasm. Its subcellular location is the secreted. The enzyme catalyses alpha-D-glucose 6-phosphate = beta-D-fructose 6-phosphate. It participates in carbohydrate degradation; glycolysis; D-glyceraldehyde 3-phosphate and glycerone phosphate from D-glucose: step 2/4. In terms of biological role, in the cytoplasm, catalyzes the conversion of glucose-6-phosphate to fructose-6-phosphate, the second step in glycolysis, and the reverse reaction during gluconeogenesis. Besides it's role as a glycolytic enzyme, also acts as a secreted cytokine: acts as an angiogenic factor (AMF) that stimulates endothelial cell motility. Acts as a neurotrophic factor, neuroleukin, for spinal and sensory neurons. It is secreted by lectin-stimulated T-cells and induces immunoglobulin secretion. The sequence is that of Glucose-6-phosphate isomerase from Pongo abelii (Sumatran orangutan).